Consider the following 436-residue polypeptide: Serine--tRNA ligase (436 aa).

Residues 43–55 (TKSEQLKQKRNEV) are compositionally biased toward basic and acidic residues. The segment at 43-68 (TKSEQLKQKRNEVSDQIAQAKRNKED) is disordered. 237-239 (TAE) serves as a coordination point for L-serine. Position 268-270 (268-270 (RSE)) interacts with ATP. Glu291 contacts L-serine. 355-358 (EISS) contacts ATP. An L-serine-binding site is contributed by Ser390.

It belongs to the class-II aminoacyl-tRNA synthetase family. Type-1 seryl-tRNA synthetase subfamily. In terms of assembly, homodimer. The tRNA molecule binds across the dimer.

The protein localises to the cytoplasm. It catalyses the reaction tRNA(Ser) + L-serine + ATP = L-seryl-tRNA(Ser) + AMP + diphosphate + H(+). The catalysed reaction is tRNA(Sec) + L-serine + ATP = L-seryl-tRNA(Sec) + AMP + diphosphate + H(+). Its pathway is aminoacyl-tRNA biosynthesis; selenocysteinyl-tRNA(Sec) biosynthesis; L-seryl-tRNA(Sec) from L-serine and tRNA(Sec): step 1/1. Functionally, catalyzes the attachment of serine to tRNA(Ser). Is also able to aminoacylate tRNA(Sec) with serine, to form the misacylated tRNA L-seryl-tRNA(Sec), which will be further converted into selenocysteinyl-tRNA(Sec). The chain is Serine--tRNA ligase from Lactobacillus johnsonii (strain CNCM I-12250 / La1 / NCC 533).